Here is a 243-residue protein sequence, read N- to C-terminus: Adapter protein MecA (243 aa).

The interval 119–140 (NQVEDGQGIAHNPTKDTNDLDP) is disordered.

This sequence belongs to the MecA family. Homodimer.

In terms of biological role, enables the recognition and targeting of unfolded and aggregated proteins to the ClpC protease or to other proteins involved in proteolysis. This chain is Adapter protein MecA, found in Lactiplantibacillus plantarum (strain ATCC BAA-793 / NCIMB 8826 / WCFS1) (Lactobacillus plantarum).